A 288-amino-acid polypeptide reads, in one-letter code: Histone H3-like centromeric protein hcp-3 (288 aa).

Residues 96 to 194 (YHARKEQARR…VTKTRRYRPG (99 aa)) form a disordered region. Residues 178-193 (MRAGRNRVTKTRRYRP) are compositionally biased toward basic residues. The tract at residues 191–288 (YRPGQKALEE…LYRRLCLRHL (98 aa)) is H3-like.

Belongs to the histone H3 family. As to quaternary structure, forms a nucleosome-like histone octamer containing two molecules each of H2A, H2B, hcp-3 and H4 assembled in one hcp-3-H4 heterotetramer and two H2A-H2B heterodimers. The hcp-3-H4 heterotetramer is more compact and structurally more rigid than corresponding H3-H4 heterotetramers. Interacts with knl-2. Interacts with lin-53.

Its subcellular location is the nucleus. The protein resides in the chromosome. It localises to the centromere. The protein localises to the kinetochore. Its function is as follows. Histone H3-like variant which exclusively replaces conventional H3 in the nucleosome core of centromeric chromatin at the inner plate of the kinetochore. Required for recruitment and assembly of kinetochore proteins, mitotic progression and chromosome segregation. May serve as an epigenetic mark that propagates centromere identity through replication and cell division. Might promote cleavage furrow stability during cytokinesis. Not required for chromosome segregation during meiosis. This chain is Histone H3-like centromeric protein hcp-3, found in Caenorhabditis elegans.